The chain runs to 291 residues: 4-diphosphocytidyl-2-C-methyl-D-erythritol kinase (291 aa).

K11 is a catalytic residue. 94 to 104 (PAGSGLGGGSA) contacts ATP. The active site involves D136.

The protein belongs to the GHMP kinase family. IspE subfamily.

The enzyme catalyses 4-CDP-2-C-methyl-D-erythritol + ATP = 4-CDP-2-C-methyl-D-erythritol 2-phosphate + ADP + H(+). It participates in isoprenoid biosynthesis; isopentenyl diphosphate biosynthesis via DXP pathway; isopentenyl diphosphate from 1-deoxy-D-xylulose 5-phosphate: step 3/6. Functionally, catalyzes the phosphorylation of the position 2 hydroxy group of 4-diphosphocytidyl-2C-methyl-D-erythritol. In Treponema pallidum (strain Nichols), this protein is 4-diphosphocytidyl-2-C-methyl-D-erythritol kinase.